We begin with the raw amino-acid sequence, 1589 residues long: MTEKDKAPNPEDVIEMDDSFSPQFVQEVNRVKSQIKSLIENNTTLRFFKPLTSNLGDVTAILRISFNNMMSKMEEKEKQSLVKELIKLVHHVAEKNTQDKVFIAASYERVVDELLRYANQKEVISTTLCVEGLIMTSDFRMCSRIDQEKWKFIKECIPKIDYKGIRTIIRYILESQLRRLPYQLSPEKVNELRRVEDVLLKIVDRDLNLMPPLITLSEVMRGTPKQAHMFPRLTEKLANLSSHFRPIADLTHVCGRPFIYPIPFHPAFHPPTSYWEDFGMNAQSPYTQSHHMLPYRPQHKAASCLYTFYMILRQPLGKDSLNPTNRNKTKSHWEPLLSVMIVEAMAETEALPEGKQIPRYQWDNITNLVMYGMSHLLVNPKNFFHYLKGLINQCKYTRARDEVMWIVFQVVSSLHKMIKIEDAVQEIVDLYNELFDGEFSWHGASDHPARMARFLAAASTWMLLEKNKAHKQNTDTIKSHIKVIHEAALNFDPKNMGMLAVLANAFKSDTRIGAQIVPAMSEALNTPPDPSQPTFDLSYQRKAVNQFDAFPKEFLDALTSRAKRSLLGQILSVFRSFGTDKLPSPAAFETLARICQSEDYEMAVKDLESLASRSLHISTQERAADIATNNQAKDQCHFLFDFLAYRLPHVHSYGKYTSTTGSLLLYFTASVAPNTPQNHQVYRLLEQALLRRMYWRTFHESVINHSQLFGSSYKENSNNVMLRHLKNPKTFSTPVDQWQFPLNPEIFKMTIYAFMRALKITGQEIPLDGTMHPIHVAGYGWPEKSTTFFPKWALEEIKKTDVKKLAPNYAEILSTTDEAFRMNTLLTGGQYVIRYADDPNPITYHCMLAVIFKQLCSKPEQDLTSEYYQVMEKKSPKDIVVMGNYLVDFIIADVKNNQDCNEQTFKTIAKTAALMCFHFNIHRADRFLLSLIMHPSTDEDAQICIQIANEFLLTPKFQERIKWFYENDVPRKEKDPYEYIKAIVKYHDAFPEFEACQLVPKNDDTGTNVHMPTYYGCLIERLLPILDQYVYVALEQQGYKMSNALLQLVSMFYRYHPMPIHFMYSVLFVSHGKMAGPDAKSFVSAFASQIEECHLTEEFEKYNHQKSSCEELIMELLDRMAASLDFVLTPPTFVAKDWRTAEMSPGAQALYLACIELMASPHSPEKLVNAMINVMQMRPHLRPFNVFNLIALLLTALPSTYADALHEEFIGVFKNGETANLKFEEIVFDNYDSSLLLHLPNRARSINMIAQIYWTQCNMALLNPFANDQVPKLLEHVKTEKDLWYTLRLVMPIIRRFWDSWDFAKTMRALRERFGPLVIMKLIIEKLGSMAESGVEIVHEAPFCDLFYNCKYVFVGDFLRETAITEFAKLPEAMRERLKYYVSQNEPAPPETPEREKTPERKDQQKEQQEQQHQQHHQNPQLHHEAQHHPHHPHQQPSMPPPQLIPQHHLQHHQQQLHHQQQQQQHLSQMMPPPQQPLQHLPHHQMDMAPPTPAPMHHQQHQMAMHQQMYPGQMFHHPQGGHMGYGMQHHMQQPHPHHPQMQGQMPSQMQHMVRMHNMTPQQQQQYAYMMQQQQHHYMQQQQHQQHHHM.

The segment at 1381–1499 (YVSQNEPAPP…PPTPAPMHHQ (119 aa)) is disordered. Over residues 1392–1410 (TPEREKTPERKDQQKEQQE) the composition is skewed to basic and acidic residues. A compositionally biased stretch (low complexity) spans 1457-1470 (LHHQQQQQQHLSQM).

This sequence belongs to the Mediator complex subunit 23 family. In terms of assembly, component of the Mediator complex.

It localises to the nucleus. Its function is as follows. Component of the Mediator complex, a coactivator involved in the regulated transcription of nearly all RNA polymerase II-dependent genes. Mediator functions as a bridge to convey information from gene-specific regulatory proteins to the basal RNA polymerase II transcription machinery. Mediator is recruited to promoters by direct interactions with regulatory proteins and serves as a scaffold for the assembly of a functional preinitiation complex with RNA polymerase II and the general transcription factors. The sequence is that of Mediator of RNA polymerase II transcription subunit 23 (sur-2) from Caenorhabditis briggsae.